We begin with the raw amino-acid sequence, 605 residues long: Glucose oxidase (605 aa).

The signal sequence occupies residues 1-18; it reads MVSVFLSTLLLAAATVQA. Residues L52, T53, and E73 each coordinate FAD. An N-linked (GlcNAc...) asparagine glycan is attached at N111. FAD-binding residues include S125, N129, G130, and S132. 2 N-linked (GlcNAc...) asparagine glycosylation sites follow: N183 and N190. A disulfide bridge links C186 with C228. V272 contacts FAD. 4 N-linked (GlcNAc...) asparagine glycosylation sites follow: N335, N375, N410, and N519. Catalysis depends on H538, which acts as the Proton acceptor. 2 residues coordinate O2: K559 and V560. FAD-binding residues include G571 and M583.

It belongs to the GMC oxidoreductase family. Homodimer. Requires FAD as cofactor.

The protein localises to the secreted. Its subcellular location is the cell wall. The protein resides in the cytoplasmic vesicle. It catalyses the reaction beta-D-glucose + O2 = D-glucono-1,5-lactone + H2O2. Its function is as follows. Glucose oxidase catalyzes the oxidation of beta-D-glucose to D-glucono-delta-lactone and hydrogen peroxide in the presence of molecular oxygen. D-glucono-delta-lactone is sequentially hydrolyzed by lactonase to D-gluconic acid, and the resulting hydrogen peroxide is hydrolyzed by catalase to oxygen and water. Glucose oxidase alone indirectly causes toxicity in the presence of glucose and is the active compound of the antifungal antibiotic talaron. Responsible for inhibition of germination of microsclerotia of Verticillium dahliae. This is Glucose oxidase from Talaromyces flavus.